A 256-amino-acid chain; its full sequence is MALVLLTNDDGIFAPGINALRARMEQIPGLEVWAVAPDRERSASGHAITTYRPLFPVRVEIPGAVAPCISVTGTPADSAKLAIEAILPRRPDLVISGINRGANLGTDIFYSGTVAAALEGPILGIPALAVSLDSMTSSDYSAAADFAAQLALKVLEEGLPEGTLLNVNVPALPREAIKGVRVTKVGRRIYRDQWVRRMHPRGQEYYWLAGELAEIHNDRESDVSAVEAGYISVTPVHLDLTRYDQMDRLRQWNLTF.

A divalent metal cation is bound by residues aspartate 9, aspartate 10, serine 42, and asparagine 99.

This sequence belongs to the SurE nucleotidase family. It depends on a divalent metal cation as a cofactor.

The protein localises to the cytoplasm. It catalyses the reaction a ribonucleoside 5'-phosphate + H2O = a ribonucleoside + phosphate. Its function is as follows. Nucleotidase that shows phosphatase activity on nucleoside 5'-monophosphates. In Symbiobacterium thermophilum (strain DSM 24528 / JCM 14929 / IAM 14863 / T), this protein is 5'-nucleotidase SurE.